Here is a 201-residue protein sequence, read N- to C-terminus: Large ribosomal subunit protein uL4 (201 aa).

A disordered region spans residues 44-71 (RAQKTRAEVSGSGKKPWRQKGTGRARSG).

The protein belongs to the universal ribosomal protein uL4 family. As to quaternary structure, part of the 50S ribosomal subunit.

In terms of biological role, one of the primary rRNA binding proteins, this protein initially binds near the 5'-end of the 23S rRNA. It is important during the early stages of 50S assembly. It makes multiple contacts with different domains of the 23S rRNA in the assembled 50S subunit and ribosome. Functionally, forms part of the polypeptide exit tunnel. In Photorhabdus laumondii subsp. laumondii (strain DSM 15139 / CIP 105565 / TT01) (Photorhabdus luminescens subsp. laumondii), this protein is Large ribosomal subunit protein uL4.